The primary structure comprises 331 residues: Mitochondrial respiration co-chaperone MRJ1 (331 aa).

A mitochondrion-targeting transit peptide spans 1–36; the sequence is MLSFQATVRPLAVSSRLHSPAAHIWRRNAHTAAMSD. The interval 35–66 is disordered; that stretch reads SDDSLDQGSSSSYGDSASQPHLGKGKGRQDSL. A compositionally biased stretch (low complexity) spans 40-53; that stretch reads DQGSSSSYGDSASQ. A J domain is found at 83–147; sequence DPFEVMALDR…SSRSAFLKTG (65 aa). Residues 203–226 are disordered; it reads DGSQGWRPYEDPSKGFSPPTSGPA. The IQ domain occupies 275 to 303; it reads RALAQARYEAATHGHIRREQIRRRVREAE.

Belongs to the DnaJ family. Interacts with QCR2.

It is found in the mitochondrion. Mitochondrial co-chaperone required for ubiquinol-cytochrome c oxidoreductase (mitochondrial respiratory chain complex III) activity. This chain is Mitochondrial respiration co-chaperone MRJ1, found in Cryptococcus neoformans var. grubii serotype A (strain H99 / ATCC 208821 / CBS 10515 / FGSC 9487) (Filobasidiella neoformans var. grubii).